We begin with the raw amino-acid sequence, 321 residues long: Cyclic AMP-AMP-AMP synthase (321 aa).

Lysine 63 serves as a coordination point for ATP. Mg(2+) contacts are provided by aspartate 72 and aspartate 74. ATP contacts are provided by residues aspartate 74, histidine 162, lysine 185, 201–203 (KSF), and asparagine 270.

Belongs to the CD-NTase family. A01 subfamily. In terms of assembly, forms complexes with Cap7 with 1:1 and 2:2 stoichimetry, and a 1:1:6 CdnC:Cap7:Cap6 complex. Mg(2+) serves as cofactor.

The catalysed reaction is 3 ATP = 3',3',3'-c-tri-AMP + 3 diphosphate. The enzyme catalyses 2 ATP = 3',3'-c-di-AMP + 2 diphosphate. Its activity is regulated as follows. The 2:2 CdnC:Cap7 (Cap7 is also called HORMA) complex is activated for cAAA synthesis by long dsDNA, but not 40 bp dsDNA or ssDNA; the 1:1 complex is inactive in vitro. The 2:2:DNA complex is catalytically disassembled and inactivated by Cap6 (also called Trip13). Cyclic nucleotide synthase (second messenger synthase) of a CBASS antivirus system. CBASS (cyclic oligonucleotide-based antiphage signaling system) provides immunity against bacteriophage. The CD-NTase protein synthesizes cyclic nucleotides in response to infection; these serve as specific second messenger signals. The signals activate a diverse range of effectors, leading to bacterial cell death and thus abortive phage infection. A type III-C(AAA) CBASS system. In terms of biological role, cyclic nucleotide synthase that upon activation catalyzes the synthesis of 3',3',3'-cyclic AMP-AMP-AMP (3',3',3'-c-tri-AMP or cAAA) as the major product, and 3',3'-c-di-AMP as a minor product. Cannot use GTP as a substrate. Its function is as follows. Protects E.coli strain JP313 against bacteriophage lambda cI- infection. When the cdnC-cap7-cap6-nucC operon is transformed into a susceptible strain it confers bacteriophage immunity. Mutations in the sensor (Cap7 also called HORMA) or effector proteins (CdnC, NucC) but not the disassembly protein (Cap6 also called Trip13) no longer confer immunity. The presence of the intact operon leads to culture collapse and cell death, which occurs before the phage has finished its replication cycle, thus protecting non-infected bacteria by aborting the phage infection and preventing its propagation. This Escherichia coli (strain MS 115-1) protein is Cyclic AMP-AMP-AMP synthase.